Consider the following 249-residue polypeptide: ATP synthase subunit a, chloroplastic (249 aa).

The next 5 membrane-spanning stretches (helical) occupy residues 38-58 (GQVLITSWVVMAIIIITSVIA), 97-117 (VPFVGTLFLFIFISNWSGALI), 136-156 (INTTVALALLTSVAYFYAGLS), 201-221 (LVVAVLISLVPLVIPVPMMLL), and 222-242 (GLFTSGIQALIFATLAAAYIG).

The protein belongs to the ATPase A chain family. As to quaternary structure, F-type ATPases have 2 components, CF(1) - the catalytic core - and CF(0) - the membrane proton channel. CF(1) has five subunits: alpha(3), beta(3), gamma(1), delta(1), epsilon(1). CF(0) has four main subunits: a, b, b' and c.

The protein resides in the plastid. The protein localises to the chloroplast thylakoid membrane. Its function is as follows. Key component of the proton channel; it plays a direct role in the translocation of protons across the membrane. This chain is ATP synthase subunit a, chloroplastic, found in Chlorokybus atmophyticus (Soil alga).